The chain runs to 699 residues: D-(-)-3-hydroxybutyrate oligomer hydrolase (699 aa).

The N-terminal stretch at 1 to 33 (MTAIRGGSRRAPGLALALLGGVLLGACHGDENA) is a signal peptide. S311 (charge relay system) is an active-site residue.

It belongs to the D-(-)-3-hydroxybutyrate oligomer hydrolase family.

Its subcellular location is the secreted. The catalysed reaction is (3R)-hydroxybutanoate dimer + H2O = 2 (R)-3-hydroxybutanoate + H(+). The protein operates within lipid metabolism; butanoate metabolism. Functionally, participates in the degradation of poly-3-hydroxybutyrate (PHB). It works downstream of poly(3-hydroxybutyrate) depolymerase, hydrolyzing D(-)-3-hydroxybutyrate oligomers of various length (3HB-oligomers) into 3HB-monomers. In Burkholderia mallei (strain ATCC 23344), this protein is D-(-)-3-hydroxybutyrate oligomer hydrolase.